The following is a 776-amino-acid chain: 5-methyltetrahydropteroyltriglutamate--homocysteine methyltransferase (776 aa).

5-methyltetrahydropteroyltri-L-glutamate is bound by residues 16–19 (RELK) and K112. L-homocysteine contacts are provided by residues 432–434 (IGS) and E485. L-methionine-binding positions include 432–434 (IGS) and E485. 5-methyltetrahydropteroyltri-L-glutamate contacts are provided by residues 516–517 (RC) and W562. D600 is a binding site for L-homocysteine. D600 contributes to the L-methionine binding site. 5-methyltetrahydropteroyltri-L-glutamate is bound at residue E606. The Zn(2+) site is built by H642, C644, and E666. H695 (proton donor) is an active-site residue. C727 provides a ligand contact to Zn(2+). A disordered region spans residues 755–776 (HAGAVHAGTPATRAEHAESALA). The segment covering 767–776 (RAEHAESALA) has biased composition (basic and acidic residues).

The protein belongs to the vitamin-B12 independent methionine synthase family. The cofactor is Zn(2+).

It catalyses the reaction 5-methyltetrahydropteroyltri-L-glutamate + L-homocysteine = tetrahydropteroyltri-L-glutamate + L-methionine. It functions in the pathway amino-acid biosynthesis; L-methionine biosynthesis via de novo pathway; L-methionine from L-homocysteine (MetE route): step 1/1. Functionally, catalyzes the transfer of a methyl group from 5-methyltetrahydrofolate to homocysteine resulting in methionine formation. The sequence is that of 5-methyltetrahydropteroyltriglutamate--homocysteine methyltransferase from Ralstonia nicotianae (strain ATCC BAA-1114 / GMI1000) (Ralstonia solanacearum).